The primary structure comprises 306 residues: Serine/threonine-protein kinase mug51 (306 aa).

The protein belongs to the STK19 family.

The catalysed reaction is L-seryl-[protein] + ATP = O-phospho-L-seryl-[protein] + ADP + H(+). It carries out the reaction L-threonyl-[protein] + ATP = O-phospho-L-threonyl-[protein] + ADP + H(+). Functionally, serine/threonine-protein kinase. Has a role in meiosis. In Schizosaccharomyces pombe (strain 972 / ATCC 24843) (Fission yeast), this protein is Serine/threonine-protein kinase mug51 (mug51).